A 197-amino-acid polypeptide reads, in one-letter code: Probable chemoreceptor glutamine deamidase CheD 2 (197 aa).

This sequence belongs to the CheD family.

The catalysed reaction is L-glutaminyl-[protein] + H2O = L-glutamyl-[protein] + NH4(+). Its function is as follows. Probably deamidates glutamine residues to glutamate on methyl-accepting chemotaxis receptors (MCPs), playing an important role in chemotaxis. This chain is Probable chemoreceptor glutamine deamidase CheD 2, found in Dechloromonas aromatica (strain RCB).